The primary structure comprises 352 residues: Fe-S cluster assembly protein DRE2 (352 aa).

The span at 1–11 (MAPTAVYTQKD) shows a compositional bias: polar residues. The disordered stretch occupies residues 1-24 (MAPTAVYTQKDSPSSSQPSSKGPA). The segment at 1–196 (MAPTAVYTQK…TVTSAPSVPL (196 aa)) is N-terminal SAM-like domain. A linker region spans residues 196-237 (LLLRKRGDPAKKKALWALTTDASASPSTKIDADALLTAEDKA). Cysteine 243, cysteine 257, cysteine 260, and cysteine 262 together coordinate [2Fe-2S] cluster. A fe-S binding site A region spans residues 243-262 (CAPVDRSAPRRKKACKNCSC). 4 residues coordinate [4Fe-4S] cluster: cysteine 315, cysteine 318, cysteine 326, and cysteine 329. 2 consecutive short sequence motifs (cx2C motif) follow at residues 315–318 (CGSC) and 326–329 (CAGC). The fe-S binding site B stretch occupies residues 315–329 (CGSCFLGDAFRCAGC).

This sequence belongs to the anamorsin family. As to quaternary structure, monomer. Interacts with TAH18. Interacts with MIA40. Requires [2Fe-2S] cluster as cofactor. [4Fe-4S] cluster is required as a cofactor.

It localises to the cytoplasm. The protein resides in the mitochondrion intermembrane space. In terms of biological role, component of the cytosolic iron-sulfur (Fe-S) protein assembly (CIA) machinery required for the maturation of extramitochondrial Fe-S proteins. Part of an electron transfer chain functioning in an early step of cytosolic Fe-S biogenesis, facilitating the de novo assembly of a [4Fe-4S] cluster on the scaffold complex CFD1-NBP35. Electrons are transferred to DRE2 from NADPH via the FAD- and FMN-containing protein TAH18. TAH18-DRE2 are also required for the assembly of the diferric tyrosyl radical cofactor of ribonucleotide reductase (RNR), probably by providing electrons for reduction during radical cofactor maturation in the catalytic small subunit RNR2. This is Fe-S cluster assembly protein DRE2 from Coprinopsis cinerea (strain Okayama-7 / 130 / ATCC MYA-4618 / FGSC 9003) (Inky cap fungus).